Consider the following 362-residue polypeptide: Ferrochelatase (362 aa).

Fe cation contacts are provided by His228 and Glu309.

It belongs to the ferrochelatase family.

The protein localises to the cytoplasm. It carries out the reaction heme b + 2 H(+) = protoporphyrin IX + Fe(2+). The protein operates within porphyrin-containing compound metabolism; protoheme biosynthesis; protoheme from protoporphyrin-IX: step 1/1. Catalyzes the ferrous insertion into protoporphyrin IX. The polypeptide is Ferrochelatase (Bordetella pertussis (strain Tohama I / ATCC BAA-589 / NCTC 13251)).